Consider the following 266-residue polypeptide: Glioma pathogenesis-related protein 1 (266 aa).

Positions 1 to 21 (MRVTLATIAWMVSFVSNYSHT) are cleaved as a signal peptide. Positions 38-175 (VRIHNKFRSE…SNGAHFICNY (138 aa)) constitute an SCP domain. The chain crosses the membrane as a helical span at residues 233–255 (YTSLFLIVNSVILILSVIITILV).

Belongs to the CRISP family. In terms of tissue distribution, according to PubMed:8973356, it is ubiquitously expressed with high levels in lung and kidney and low levels in heart and liver. Highly expressed in cell lines derived from nervous system tumors arising from glia, low or absent in non-glial-derived nervous system tumor cell lines. Also found in fetal kidney. According to PubMed:7607567 it is expressed only in brain tumor glioblastoma multiforme/astrocytoma and not in other nervous system tumors or normal fetal or adult tissues.

The protein resides in the membrane. The polypeptide is Glioma pathogenesis-related protein 1 (GLIPR1) (Homo sapiens (Human)).